A 247-amino-acid chain; its full sequence is 1-(5-phosphoribosyl)-5-[(5-phosphoribosylamino)methylideneamino] imidazole-4-carboxamide isomerase (247 aa).

Catalysis depends on Asp8, which acts as the Proton acceptor. The active-site Proton donor is Asp129.

This sequence belongs to the HisA/HisF family.

The protein localises to the cytoplasm. It catalyses the reaction 1-(5-phospho-beta-D-ribosyl)-5-[(5-phospho-beta-D-ribosylamino)methylideneamino]imidazole-4-carboxamide = 5-[(5-phospho-1-deoxy-D-ribulos-1-ylimino)methylamino]-1-(5-phospho-beta-D-ribosyl)imidazole-4-carboxamide. It functions in the pathway amino-acid biosynthesis; L-histidine biosynthesis; L-histidine from 5-phospho-alpha-D-ribose 1-diphosphate: step 4/9. This chain is 1-(5-phosphoribosyl)-5-[(5-phosphoribosylamino)methylideneamino] imidazole-4-carboxamide isomerase, found in Rhodospirillum centenum (strain ATCC 51521 / SW).